An 84-amino-acid chain; its full sequence is Small ribosomal subunit protein uS17 (84 aa).

Belongs to the universal ribosomal protein uS17 family. Part of the 30S ribosomal subunit.

One of the primary rRNA binding proteins, it binds specifically to the 5'-end of 16S ribosomal RNA. This is Small ribosomal subunit protein uS17 from Porphyromonas gingivalis (strain ATCC 33277 / DSM 20709 / CIP 103683 / JCM 12257 / NCTC 11834 / 2561).